We begin with the raw amino-acid sequence, 326 residues long: F-box/LRR-repeat protein 12 (326 aa).

Positions 1–47 (MATLVELPDSVLLEIFSYLPVRDRIRISRVCHRWKRLVDDRWLWRHV) constitute an F-box domain. LRR repeat units lie at residues 51–78 (LYTMRPKVMWHLLRRYMASRLHSLRMGG), 86–111 (APQLSPALLRALGQKCPNLKRLCLHV), 113–133 (DLSMVPITSLPSTLRTLELHS), 161–185 (VPAFRDEHLQGLTRFRALRSLVLGG), 186–211 (TYRVTETGLDAGLQELSYLQRLEVLG), 212–236 (CTLSADSTLLAISRHLRDVRKIRLT), 237–261 (VRGLSAPGLAVLEGMPALESLCLQG), and 266–291 (PEMPSPTEILSSCLTMPKLRVLELQG).

Interacts with SKP1 and CUL1.

It participates in protein modification; protein ubiquitination. Its function is as follows. Substrate-recognition component of the SCF (SKP1-CUL1-F-box protein)-type E3 ubiquitin ligase complex. Mediates the polyubiquitination and proteasomal degradation of CAMK1 leading to disruption of cyclin D1/CDK4 complex assembly which results in G1 cell cycle arrest in lung epithelia. The polypeptide is F-box/LRR-repeat protein 12 (FBXL12) (Homo sapiens (Human)).